The primary structure comprises 452 residues: Phosphoglucosamine mutase (452 aa).

The Phosphoserine intermediate role is filled by S108. The Mg(2+) site is built by S108, D247, D249, and D251. Residue S108 is modified to Phosphoserine.

Belongs to the phosphohexose mutase family. The cofactor is Mg(2+). In terms of processing, activated by phosphorylation.

The catalysed reaction is alpha-D-glucosamine 1-phosphate = D-glucosamine 6-phosphate. Its function is as follows. Catalyzes the conversion of glucosamine-6-phosphate to glucosamine-1-phosphate. The protein is Phosphoglucosamine mutase of Burkholderia thailandensis (strain ATCC 700388 / DSM 13276 / CCUG 48851 / CIP 106301 / E264).